Reading from the N-terminus, the 614-residue chain is Sorting nexin-18 (614 aa).

The SH3 domain occupies 1–61; that stretch reads MALRARALYD…PASYVQVIRA (61 aa). The disordered stretch occupies residues 85 to 218; the sequence is GFEPLPAAPP…SQELGHGEPQ (134 aa). The segment covering 90 to 101 has biased composition (pro residues); the sequence is PAAPPAAFPPLL. Positions 141–151 are enriched in acidic residues; the sequence is SDDDWDDEWDD. The region spanning 266–376 is the PX domain; the sequence is FQCTIDDPTK…HFLTCPSSTD (111 aa). A 1,2-diacyl-sn-glycero-3-phospho-(1D-myo-inositol-4,5-bisphosphate)-binding residues include Arg-302, Lys-304, and Arg-342. The BAR domain maps to 411-614; sequence LQEVESKIDG…EEALHKYDSV (204 aa).

The protein belongs to the sorting nexin family. Heterodimer with SNX9. Interacts with ITCH. Interacts with dynamin-2 (DNM2), SYNJ1 and WASL. Interacts with the AP-1 complex. Interacts with FCHSD1 (via the F-BAR domain).

Its subcellular location is the endomembrane system. It localises to the endosome membrane. It is found in the recycling endosome membrane. The protein resides in the cell membrane. The protein localises to the cytoplasmic vesicle membrane. Involved in endocytosis and intracellular vesicle trafficking, both during interphase and at the end of mitosis. Required for efficient progress through mitosis and cytokinesis. Required for normal formation of the cleavage furrow at the end of mitosis. Plays a role in endocytosis via clathrin-coated pits, but also clathrin-independent, actin-dependent fluid-phase endocytosis. Plays a role in macropinocytosis. Binds to membranes enriched in phosphatidylinositol 4,5-bisphosphate and promotes membrane tubulation. Stimulates the GTPase activity of DNM2. Promotes DNM2 location at the plasma membrane. Together with DNM2, involved in autophagosome assembly by regulating trafficking from recycling endosomes of phospholipid scramblase ATG9A. The sequence is that of Sorting nexin-18 from Mus musculus (Mouse).